Here is a 155-residue protein sequence, read N- to C-terminus: Medium/long-chain acyl-CoA thioesterase YigI (155 aa).

This sequence belongs to the YigI thioesterase family.

It localises to the cytoplasm. It catalyses the reaction a fatty acyl-CoA + H2O = a fatty acid + CoA + H(+). It carries out the reaction a medium-chain fatty acyl-CoA + H2O = a medium-chain fatty acid + CoA + H(+). The enzyme catalyses a long-chain fatty acyl-CoA + H2O = a long-chain fatty acid + CoA + H(+). Its function is as follows. Displays thioesterase activity against medium- to long-chain acyl-CoA substrates. Is involved in the thioesterase-dependent beta-oxidation pathway of (9Z,11E)-octadecadienoate (conjugated linoleic acid or CLA), along with TesB and FadM. This chain is Medium/long-chain acyl-CoA thioesterase YigI (yigI), found in Shigella flexneri.